Reading from the N-terminus, the 221-residue chain is Octanoyltransferase (221 aa).

In terms of domain architecture, BPL/LPL catalytic spans aspartate 29 to arginine 208. Residues arginine 67–histidine 74, alanine 138–glycine 140, and glycine 151–alanine 153 each bind substrate. Cysteine 169 serves as the catalytic Acyl-thioester intermediate.

The protein belongs to the LipB family.

Its subcellular location is the cytoplasm. The catalysed reaction is octanoyl-[ACP] + L-lysyl-[protein] = N(6)-octanoyl-L-lysyl-[protein] + holo-[ACP] + H(+). Its pathway is protein modification; protein lipoylation via endogenous pathway; protein N(6)-(lipoyl)lysine from octanoyl-[acyl-carrier-protein]: step 1/2. In terms of biological role, catalyzes the transfer of endogenously produced octanoic acid from octanoyl-acyl-carrier-protein onto the lipoyl domains of lipoate-dependent enzymes. Lipoyl-ACP can also act as a substrate although octanoyl-ACP is likely to be the physiological substrate. This Acidothermus cellulolyticus (strain ATCC 43068 / DSM 8971 / 11B) protein is Octanoyltransferase.